The following is a 236-amino-acid chain: Phosphoribosylaminoimidazole-succinocarboxamide synthase (236 aa).

Belongs to the SAICAR synthetase family.

The enzyme catalyses 5-amino-1-(5-phospho-D-ribosyl)imidazole-4-carboxylate + L-aspartate + ATP = (2S)-2-[5-amino-1-(5-phospho-beta-D-ribosyl)imidazole-4-carboxamido]succinate + ADP + phosphate + 2 H(+). Its pathway is purine metabolism; IMP biosynthesis via de novo pathway; 5-amino-1-(5-phospho-D-ribosyl)imidazole-4-carboxamide from 5-amino-1-(5-phospho-D-ribosyl)imidazole-4-carboxylate: step 1/2. In Rickettsia typhi (strain ATCC VR-144 / Wilmington), this protein is Phosphoribosylaminoimidazole-succinocarboxamide synthase.